Reading from the N-terminus, the 264-residue chain is MLELRLVQGSLLKKVMDSIKDLVNDANFDCSATGFSLQAMDSSHVALVAVLLRSEGFEHYRCDRNISMGMNLGNMAKMLKCAGNDDIITIKADDGSDTVTFMFESPTQDKIADFEMKLMDIDSEHLGIPEAEYHAIVRMPSAEFARICKDLSSIGDTVVISVTKEGVKFSTRGDIGTANIVCRQNTTVDKPEEATVIEMNEPVSLTFALRYMNSFTKASPLSSTVTISLSSELPVVVEYKIAEMGYIRFYLAPKIEEEEDESKP.

A DNA-binding region spans residues 61–80 (RCDRNISMGMNLGNMAKMLK).

Belongs to the PCNA family.

The protein resides in the nucleus. Its function is as follows. This protein is an auxiliary protein of DNA polymerase delta and is involved in the control of eukaryotic DNA replication by increasing the polymerase's processibility during elongation of the leading strand. The protein is Proliferating cell nuclear antigen of Daucus carota (Wild carrot).